The sequence spans 446 residues: Na(+)-translocating NADH-quinone reductase subunit A (446 aa).

The protein belongs to the NqrA family. Composed of six subunits; NqrA, NqrB, NqrC, NqrD, NqrE and NqrF.

It catalyses the reaction a ubiquinone + n Na(+)(in) + NADH + H(+) = a ubiquinol + n Na(+)(out) + NAD(+). In terms of biological role, NQR complex catalyzes the reduction of ubiquinone-1 to ubiquinol by two successive reactions, coupled with the transport of Na(+) ions from the cytoplasm to the periplasm. NqrA to NqrE are probably involved in the second step, the conversion of ubisemiquinone to ubiquinol. The polypeptide is Na(+)-translocating NADH-quinone reductase subunit A (Vibrio cholerae serotype O1 (strain ATCC 39541 / Classical Ogawa 395 / O395)).